We begin with the raw amino-acid sequence, 451 residues long: 23S rRNA (uracil(1939)-C(5))-methyltransferase RlmD (451 aa).

The tract at residues 1 to 21 (MAKHERGLRFQPTGGVKSVQI) is disordered. A TRAM domain is found at 20 to 78 (QIPAGKKQRLSIERLSDDGRGIAFLEGKTWFVAGSLAGEEVEARVLNARGKVVEARTER). [4Fe-4S] cluster is bound by residues C91, C97, C100, and C179. Residues Q283, F312, N317, E333, D360, and D381 each contribute to the S-adenosyl-L-methionine site. The Nucleophile role is filled by C407.

The protein belongs to the class I-like SAM-binding methyltransferase superfamily. RNA M5U methyltransferase family. RlmD subfamily.

The catalysed reaction is uridine(1939) in 23S rRNA + S-adenosyl-L-methionine = 5-methyluridine(1939) in 23S rRNA + S-adenosyl-L-homocysteine + H(+). Catalyzes the formation of 5-methyl-uridine at position 1939 (m5U1939) in 23S rRNA. The sequence is that of 23S rRNA (uracil(1939)-C(5))-methyltransferase RlmD from Pseudomonas syringae pv. tomato (strain ATCC BAA-871 / DC3000).